A 311-amino-acid polypeptide reads, in one-letter code: Mediator of RNA polymerase II transcription subunit 27-B (311 aa).

The protein belongs to the Mediator complex subunit 27 family. In terms of assembly, component of the Mediator complex.

The protein localises to the nucleus. Component of the Mediator complex, a coactivator involved in the regulated transcription of nearly all RNA polymerase II-dependent genes. Mediator functions as a bridge to convey information from gene-specific regulatory proteins to the basal RNA polymerase II transcription machinery. Mediator is recruited to promoters by direct interactions with regulatory proteins and serves as a scaffold for the assembly of a functional preinitiation complex with RNA polymerase II and the general transcription factors. This is Mediator of RNA polymerase II transcription subunit 27-B (med27-b) from Xenopus laevis (African clawed frog).